Consider the following 793-residue polypeptide: MIKDKESPIRSCHFVYIVALVFGTIIQFSDESEFVVDMSKTSLIHVPKDLPPKTKVLDLSQNNISELHLSDISFLSGLRVLRLSHNRIQGLDISIFKFNHDLEYLDLSHNQLQKISCHPITTTLKHLDLSFNDFDALPICKEFGNLTQLNFLGLSATKLQQLDLLPIAHLHLSCILLDLEDYMKENKKESLQILNTKKLHLVFHPNSFFSVQVDISANSLGCLQLTNIKLNDYNCQVLLKFLSGLTGGPTLLNFTLNHVETTWKCLVKVFQFLWPKPIEYLNIYNLTIVESIDEEVFTYYKTTLKALKIEHITNKVFIFSQTALYTVFSEMNILMLTISDTRFIHMLCPQEPSTFKFLNFTQNSFTDSVFQNCDTLARLETLILQKNELKDLFKTSLMTKDMLSLETLDVSWNSLEYDRSNGNCSWVGSIVVLNLSSNALTDSVFRCLPPRIKVLDLHNNRIRSIPKDVTGLETLQELNLASNSLAHLPGCGIFSSLSILIIEHNSISNPSADFFQSCQKIRSLKAGNNPFQCSCELRDFIQSVGQVSSDVVEGWPESYKCDYPESYKGTPLKDFQVSELSCNTALLIITIVVPGLVLAVAVTVLCIYLDLPWYLRMVCQWTQTRRRARNVPLEELQRTLQFHAFISYSEHDSAWVKNELIPNLEKEDIRICLHERNFVAGKSIVENIINCIEKSYKSIFVLSPNFVQSEWCHYELYFAHHNLFHEGSDNLILILLDPIPQYSIPSSYHKLRALMAQRTYLEWPKEKSKHGLFWANLRASINIKLMEKAAEIH.

Residues 1–23 (MIKDKESPIRSCHFVYIVALVFG) form the signal peptide. The Extracellular segment spans residues 24–584 (TIIQFSDESE…FQVSELSCNT (561 aa)). LRR repeat units follow at residues 54 to 77 (TKVL…FLSG), 78 to 101 (LRVL…FNHD), 102 to 122 (LEYL…PITT), 123 to 147 (TLKH…GNLT), 148 to 168 (QLNF…LPIA), 169 to 196 (HLHL…ILNT), 197 to 219 (KKLH…SANS), 220 to 250 (LGCL…GGPT), 251 to 277 (LLNF…WPKP), 278 to 303 (IEYL…YKTT), 304 to 330 (LKAL…VFSE), 331 to 354 (MNIL…EPST), 355 to 378 (FKFL…TLAR), 379 to 404 (LETL…DMLS), 405 to 428 (LETL…SWVG), 429 to 449 (SIVV…RCLP), 450 to 473 (PRIK…TGLE), 474 to 495 (TLQE…GIFS), and 496 to 519 (SLSI…QSCQ). The N-linked (GlcNAc...) asparagine glycan is linked to Asn63. Cys117 and Cys140 are oxidised to a cystine. N-linked (GlcNAc...) asparagine glycosylation is present at Asn145. A disulfide bridge links Cys235 with Cys265. Asn253 and Asn285 each carry an N-linked (GlcNAc...) asparagine glycan. Cys348 and Cys373 are disulfide-bonded. The N-linked (GlcNAc...) asparagine glycan is linked to Asn359. N-linked (GlcNAc...) asparagine glycans are attached at residues Asn423 and Asn434. Cys424 and Cys447 form a disulfide bridge. The region spanning 520-575 (KIRSLKAGNNPFQCSCELRDFIQSVGQVSSDVVEGWPESYKCDYPESYKGTPLKDF) is the LRRCT domain. The chain crosses the membrane as a helical span at residues 585–605 (ALLIITIVVPGLVLAVAVTVL). Over 606–793 (CIYLDLPWYL…KLMEKAAEIH (188 aa)) the chain is Cytoplasmic. The TIR domain occupies 640–781 (LQFHAFISYS…LFWANLRASI (142 aa)).

The protein belongs to the Toll-like receptor family. Homodimer (via cytoplasmic TIR domain). Heterodimer with TLR2 via their respective extracellular domains. Binds MYD88 via their respective TIR domains. Interacts with CD36, following CD36 stimulation by oxLDL or amyloid-beta 42, and forms a heterodimer with TLR4. The trimeric complex is internalized and triggers inflammatory response. LYN kinase activity facilitates TLR4-TLR6 heterodimerization and signal initiation. The heterodimer TLR2:TLR6 interacts with CD14 and CD36 in response to triacylated lipopeptides. As to expression, highest expression levels seen in blood and lymph node, intermediate expression seen in spleen and lowest expression seen in the liver, lung and udder cistern.

The protein resides in the cell membrane. The protein localises to the cytoplasmic vesicle. Its subcellular location is the phagosome membrane. It is found in the membrane raft. It localises to the golgi apparatus. Participates in the innate immune response to Gram-positive bacteria and fungi. Specifically recognizes diacylated and, to a lesser extent, triacylated lipopeptides. In response to diacylated lipopeptides, forms the activation cluster TLR2:TLR6:CD14:CD36, this cluster triggers signaling from the cell surface and subsequently is targeted to the Golgi in a lipid-raft dependent pathway. Acts via MYD88 and TRAF6, leading to NF-kappa-B activation, cytokine secretion and the inflammatory response. Recognizes mycoplasmal macrophage-activating lipopeptide-2kD (MALP-2), soluble tuberculosis factor (STF), phenol-soluble modulin (PSM) and B.burgdorferi outer surface protein A lipoprotein (OspA-L) cooperatively with TLR2. In complex with TLR4, promotes sterile inflammation in monocytes/macrophages in response to oxidized low-density lipoprotein (oxLDL) or amyloid-beta 42. In this context, the initial signal is provided by oxLDL- or amyloid-beta 42-binding to CD36. This event induces the formation of a heterodimer of TLR4 and TLR6, which is rapidly internalized and triggers inflammatory response, leading to the NF-kappa-B-dependent production of CXCL1, CXCL2 and CCL9 cytokines, via MYD88 signaling pathway, and CCL5 cytokine, via TICAM1 signaling pathway, as well as IL1B secretion. The chain is Toll-like receptor 6 from Bos taurus (Bovine).